An 80-amino-acid polypeptide reads, in one-letter code: Serine palmitoyltransferase small subunit A-B (80 aa).

Residues methionine 1–histidine 21 lie on the Cytoplasmic side of the membrane. A helical transmembrane segment spans residues valine 22–leucine 38. At glutamate 39 to arginine 43 the chain is on the lumenal side. The chain crosses the membrane as a helical span at residues threonine 44–proline 66. Topologically, residues glutamine 67–glutamine 80 are cytoplasmic.

This sequence belongs to the SPTSS family. SPTSSA subfamily. In terms of assembly, component of the serine palmitoyltransferase (SPT) complex, which is composed of SPTLC1, SPTLC2 or SPTLC3 and SPTSSA or SPTSSB. The heterodimer consisting of SPTLC1 and SPTLC2/SPTLC3 forms the catalytic core of the enzyme, while SPTSSA or SPTSSB subunits determine substrate specificity. SPT also interacts with ORMDL proteins, especially ORMDL3, which negatively regulate SPT activity in the presence of ceramides.

It is found in the endoplasmic reticulum membrane. Its pathway is lipid metabolism; sphingolipid metabolism. Functionally, component of the serine palmitoyltransferase multisubunit enzyme (SPT) that catalyzes the initial and rate-limiting step in sphingolipid biosynthesis by condensing L-serine and activated acyl-CoA (most commonly palmitoyl-CoA) to form long-chain bases. The SPT complex is composed of SPTLC1, SPTLC2 or SPTLC3 and SPTSSA or SPTSSB. Within this complex, the heterodimer consisting of SPTLC1 and SPTLC2/SPTLC3 forms the catalytic core. Within the SPT complex, SPTSSA stimulates the catalytic activity and plays a role in substrate specificity, which depends upon the overall complex composition. The SPTLC1-SPTLC2-SPTSSA complex shows a strong preference for C16-CoA substrate, while the SPTLC1-SPTLC3-SPTSSA isozyme uses both C14-CoA and C16-CoA as substrates, with a slight preference for C14-CoA. Independently of its action as a SPT component, may be involved in MBOAT7 localization to mitochondria-associated membranes, a membrane bridge between the endoplasmic reticulum and mitochondria, may hence affect MBOAT7-catalyzed incorporation of arachidonic acid into phosphatidylinositol. This Xenopus laevis (African clawed frog) protein is Serine palmitoyltransferase small subunit A-B (sptssa-b).